Consider the following 77-residue polypeptide: Large ribosomal subunit protein bL28 (77 aa).

The protein belongs to the bacterial ribosomal protein bL28 family.

The protein is Large ribosomal subunit protein bL28 of Polaromonas naphthalenivorans (strain CJ2).